Reading from the N-terminus, the 331-residue chain is ADP-L-glycero-D-manno-heptose-6-epimerase (331 aa).

Residues phenylalanine 11–isoleucine 12, aspartate 32–asparagine 33, lysine 39, lysine 54, leucine 75–threonine 79, and asparagine 92 contribute to the NADP(+) site. Tyrosine 139 (proton acceptor) is an active-site residue. An NADP(+)-binding site is contributed by lysine 143. Substrate is bound at residue asparagine 168. 2 residues coordinate NADP(+): valine 169 and lysine 177. Catalysis depends on lysine 177, which acts as the Proton acceptor. Substrate contacts are provided by residues arginine 179, glutamine 186, phenylalanine 200–histidine 203, histidine 213, and tyrosine 292.

This sequence belongs to the NAD(P)-dependent epimerase/dehydratase family. HldD subfamily. Homopentamer. The cofactor is NADP(+).

It carries out the reaction ADP-D-glycero-beta-D-manno-heptose = ADP-L-glycero-beta-D-manno-heptose. The protein operates within nucleotide-sugar biosynthesis; ADP-L-glycero-beta-D-manno-heptose biosynthesis; ADP-L-glycero-beta-D-manno-heptose from D-glycero-beta-D-manno-heptose 7-phosphate: step 4/4. In terms of biological role, catalyzes the interconversion between ADP-D-glycero-beta-D-manno-heptose and ADP-L-glycero-beta-D-manno-heptose via an epimerization at carbon 6 of the heptose. In Cupriavidus pinatubonensis (strain JMP 134 / LMG 1197) (Cupriavidus necator (strain JMP 134)), this protein is ADP-L-glycero-D-manno-heptose-6-epimerase.